Reading from the N-terminus, the 297-residue chain is MKDRLFVISQYVLPHHLISRLAGCLAECRLPWVKNTFIKWFVRHFQVDMREAQIEEPTAYEHFNAFFTRALKDGARPLDSTPGAILNPCDGAISQLGKIEQGRIFQAKGHSFSAMELLGGDHERAAPFMGGAFATVYLSPKDYHRVHMPVSGTLREMVYVPGRIFSVNTVTAQGVPELFARNERVVCLFDTEHGPMAMVLVGAMIVASIETVWAGLVTPPKRSLKTFRYDEAARAPIHLEKGAEMGRFKLGSTVILLFGPDRVRWAEQLGPLSPVCMGESLGQAAITAAASEAIELQ.

Catalysis depends on charge relay system; for autoendoproteolytic cleavage activity residues aspartate 90, histidine 147, and serine 252. The active-site Schiff-base intermediate with substrate; via pyruvic acid; for decarboxylase activity is the serine 252. Pyruvic acid (Ser); by autocatalysis is present on serine 252.

It belongs to the phosphatidylserine decarboxylase family. PSD-B subfamily. Prokaryotic type I sub-subfamily. As to quaternary structure, heterodimer of a large membrane-associated beta subunit and a small pyruvoyl-containing alpha subunit. Pyruvate serves as cofactor. Post-translationally, is synthesized initially as an inactive proenzyme. Formation of the active enzyme involves a self-maturation process in which the active site pyruvoyl group is generated from an internal serine residue via an autocatalytic post-translational modification. Two non-identical subunits are generated from the proenzyme in this reaction, and the pyruvate is formed at the N-terminus of the alpha chain, which is derived from the carboxyl end of the proenzyme. The autoendoproteolytic cleavage occurs by a canonical serine protease mechanism, in which the side chain hydroxyl group of the serine supplies its oxygen atom to form the C-terminus of the beta chain, while the remainder of the serine residue undergoes an oxidative deamination to produce ammonia and the pyruvoyl prosthetic group on the alpha chain. During this reaction, the Ser that is part of the protease active site of the proenzyme becomes the pyruvoyl prosthetic group, which constitutes an essential element of the active site of the mature decarboxylase.

The protein resides in the cell membrane. It carries out the reaction a 1,2-diacyl-sn-glycero-3-phospho-L-serine + H(+) = a 1,2-diacyl-sn-glycero-3-phosphoethanolamine + CO2. It participates in phospholipid metabolism; phosphatidylethanolamine biosynthesis; phosphatidylethanolamine from CDP-diacylglycerol: step 2/2. In terms of biological role, catalyzes the formation of phosphatidylethanolamine (PtdEtn) from phosphatidylserine (PtdSer). The sequence is that of Phosphatidylserine decarboxylase proenzyme from Stutzerimonas stutzeri (strain A1501) (Pseudomonas stutzeri).